A 50-amino-acid chain; its full sequence is Metallothionein zym1 (50 aa).

Zn(2+) is bound by residues cysteine 7, cysteine 15, cysteine 17, cysteine 21, cysteine 23, cysteine 26, cysteine 30, cysteine 32, cysteine 40, cysteine 42, cysteine 45, and cysteine 47.

This sequence belongs to the metallothionein superfamily.

The protein localises to the cytoplasm. It localises to the nucleus. Functionally, metallothionein involved in tolerance to zinc and cadmium. Binds four zinc ions. The protein is Metallothionein zym1 (zym1) of Schizosaccharomyces pombe (strain 972 / ATCC 24843) (Fission yeast).